A 210-amino-acid chain; its full sequence is Protein RCR2 (210 aa).

The helical transmembrane segment at 41–61 (WIFFIFFIVALLILLFSTAKV) threads the bilayer. The disordered stretch occupies residues 125-149 (PNGKTEYLAPPPLSEEQASSTDKDL). Ser161 is subject to Phosphoserine. Residues 175 to 199 (NNFVNGQSNRNEQHSPTVESSSFDV) show a composition bias toward polar residues. The tract at residues 175-210 (NNFVNGQSNRNEQHSPTVESSSFDVNNAPARAKVSK) is disordered. Position 191 is a phosphothreonine (Thr191).

It to yeast YBR005W.

Its subcellular location is the membrane. In Saccharomyces cerevisiae (strain ATCC 204508 / S288c) (Baker's yeast), this protein is Protein RCR2 (RCR2).